We begin with the raw amino-acid sequence, 441 residues long: Ribulose bisphosphate carboxylase large chain (441 aa).

K5 bears the N6,N6,N6-trimethyllysine mark. N114 and T164 together coordinate substrate. K166 acts as the Proton acceptor in catalysis. K168 provides a ligand contact to substrate. Residues K192, D194, and E195 each coordinate Mg(2+). K192 carries the post-translational modification N6-carboxylysine. H285 (proton acceptor) is an active-site residue. Substrate-binding residues include R286, H318, and S370.

The protein belongs to the RuBisCO large chain family. Type I subfamily. In terms of assembly, heterohexadecamer of 8 large chains and 8 small chains; disulfide-linked. The disulfide link is formed within the large subunit homodimers. The cofactor is Mg(2+). In terms of processing, the disulfide bond which can form in the large chain dimeric partners within the hexadecamer appears to be associated with oxidative stress and protein turnover.

The protein resides in the plastid. It localises to the chloroplast. It carries out the reaction 2 (2R)-3-phosphoglycerate + 2 H(+) = D-ribulose 1,5-bisphosphate + CO2 + H2O. It catalyses the reaction D-ribulose 1,5-bisphosphate + O2 = 2-phosphoglycolate + (2R)-3-phosphoglycerate + 2 H(+). RuBisCO catalyzes two reactions: the carboxylation of D-ribulose 1,5-bisphosphate, the primary event in carbon dioxide fixation, as well as the oxidative fragmentation of the pentose substrate in the photorespiration process. Both reactions occur simultaneously and in competition at the same active site. The protein is Ribulose bisphosphate carboxylase large chain of Pellaea rotundifolia (Button fern).